The chain runs to 522 residues: Maturase K (522 aa).

This sequence belongs to the intron maturase 2 family. MatK subfamily.

It localises to the plastid. It is found in the chloroplast. Functionally, usually encoded in the trnK tRNA gene intron. Probably assists in splicing its own and other chloroplast group II introns. The sequence is that of Maturase K from Iris sanguinea (Japanese iris).